An 864-amino-acid chain; its full sequence is Translation initiation factor IF-2 (864 aa).

Positions 140–171 (DSRSLNTKKENKLKISNKDEQNKKFNQHRESN) are enriched in basic and acidic residues. The disordered stretch occupies residues 140–179 (DSRSLNTKKENKLKISNKDEQNKKFNQHRESNSFDLNHKK). In terms of domain architecture, tr-type G spans 364 to 533 (IRAPVVTIMG…LLQAEMLELK (170 aa)). Residues 373 to 380 (GHVDHGKT) form a G1 region. Position 373 to 380 (373 to 380 (GHVDHGKT)) interacts with GTP. Positions 398–402 (GITQN) are G2. The segment at 419–422 (DTPG) is G3. Residues 419-423 (DTPGH) and 473-476 (NKID) each bind GTP. The tract at residues 473 to 476 (NKID) is G4. The tract at residues 509–511 (SAK) is G5.

It belongs to the TRAFAC class translation factor GTPase superfamily. Classic translation factor GTPase family. IF-2 subfamily.

The protein resides in the cytoplasm. Functionally, one of the essential components for the initiation of protein synthesis. Protects formylmethionyl-tRNA from spontaneous hydrolysis and promotes its binding to the 30S ribosomal subunits. Also involved in the hydrolysis of GTP during the formation of the 70S ribosomal complex. The chain is Translation initiation factor IF-2 from Buchnera aphidicola subsp. Acyrthosiphon pisum (strain 5A).